An 808-amino-acid chain; its full sequence is Glutamate receptor 1.1 (808 aa).

An N-terminal signal peptide occupies residues methionine 1–alanine 19. The Extracellular segment spans residues alanine 20 to lysine 541. 3 N-linked (GlcNAc...) asparagine glycosylation sites follow: asparagine 288, asparagine 339, and asparagine 504. The helical transmembrane segment at serine 542–glutamate 562 threads the bilayer. The Cytoplasmic portion of the chain corresponds to arginine 563–glutamine 570. A helical membrane pass occupies residues glycine 571–alanine 591. The Cytoplasmic segment spans residues histidine 592 to arginine 602. A helical transmembrane segment spans residues phenylalanine 603–leucine 623. The Extracellular segment spans residues threonine 624–arginine 771. The chain crosses the membrane as a helical span at residues glycine 772–threonine 792. Topologically, residues arginine 793–lysine 808 are cytoplasmic.

This sequence belongs to the glutamate-gated ion channel (TC 1.A.10.1) family. As to quaternary structure, may form heteromers. In terms of tissue distribution, expressed predominantly in roots. First detected in the root-shoot junction, and later in lateral roots and at the margin of matures leaves.

Its subcellular location is the membrane. Its function is as follows. Glutamate-gated receptor that probably acts as a non-selective cation channel. Can transport sodium, potassium, and calcium ions. Functions as a carbon and nitrogen regulator and/or sensor that regulates carbon and nitrogen metabolism and distinct physiological process such as germination through the control of acid abscisic (ABA) biosynthesis. May be involved in light-signal transduction and calcium homeostasis via the regulation of calcium influx into cells. Seems required for the regulation of the abscisic acid (ABA) signaling pathway that modulates many aspects of plant physiology such as seed germination and response to drought (e.g. stomata opening). The protein is Glutamate receptor 1.1 (GLR1.1) of Arabidopsis thaliana (Mouse-ear cress).